Reading from the N-terminus, the 401-residue chain is O-methyltransferase mfmE (401 aa).

Residues 243-244 (GG) and Asp268 each bind S-adenosyl-L-methionine. His308 (proton acceptor) is an active-site residue.

This sequence belongs to the class I-like SAM-binding methyltransferase superfamily. Cation-independent O-methyltransferase family. COMT subfamily.

It participates in secondary metabolite biosynthesis; terpenoid biosynthesis. In terms of biological role, O-methyltransferase; part of the gene cluster that mediates the biosynthesis of the phthalide-terpenoid hybrid 11'-O-desmethylfendlerol. Within the pathway, mfmE catalyzes the 7-O-methylation of the phthalide 5,7-dihydroxy-4-(hydroxymethyl)-6-methylphthalide to yield 5-hydroxy-4-(hydroxymethyl)-7-methoxy-6-methylphthalide. The biosynthesis of 11'-O-desmethylfendlerol begins with the NR-PKS mfmB that forms 3,5-dimethylorsellinic acid (DMOA), which is then transformed into the phthalide 5,7-dihydroxy-4-(hydroxymethyl)-6-methylphthalide by the cytochrome P450 monooxygenase mfmA and the hydrolase mfmC. Subsequently, the methyltransferase mfmE catalyzes 7-O-methylation to yield 5-hydroxy-4-(hydroxymethyl)-7-methoxy-6-methylphthalide, which undergoes C-3 hydroxylation by the cytochrome P450 monooxygenase mfmF. The resultant cyclopolic acid (2,5-dihydroxy-4-(hydroxymethyl)-7-methoxy-6-methylphthalide) is then farnesylated by the DMATS-type prenyltransferase mfmD to afford 5-O-farnesylcyclopolic acid. Finally, the Pyr4-family terpene cyclase mfmH cyclizes the farnesyl moiety of 5-O-farnesylcyclopolic acid into a drimane-like structure, thus completing the biosynthesis of 11'-O-desmethylfendlerol. The sequence is that of O-methyltransferase mfmE from Annulohypoxylon moriforme (Filamentous fungus).